The chain runs to 130 residues: Phosphoribosyl-AMP cyclohydrolase 1 (130 aa).

Mg(2+) is bound at residue Asp-77. Position 78 (Cys-78) interacts with Zn(2+). Mg(2+) is bound by residues Asp-79 and Asp-81. Zn(2+)-binding residues include Cys-95 and Cys-102.

It belongs to the PRA-CH family. Homodimer. Mg(2+) serves as cofactor. Zn(2+) is required as a cofactor.

The protein resides in the cytoplasm. It carries out the reaction 1-(5-phospho-beta-D-ribosyl)-5'-AMP + H2O = 1-(5-phospho-beta-D-ribosyl)-5-[(5-phospho-beta-D-ribosylamino)methylideneamino]imidazole-4-carboxamide. The protein operates within amino-acid biosynthesis; L-histidine biosynthesis; L-histidine from 5-phospho-alpha-D-ribose 1-diphosphate: step 3/9. Its function is as follows. Catalyzes the hydrolysis of the adenine ring of phosphoribosyl-AMP. This Pseudomonas fluorescens (strain ATCC BAA-477 / NRRL B-23932 / Pf-5) protein is Phosphoribosyl-AMP cyclohydrolase 1.